The sequence spans 97 residues: Aspartyl/glutamyl-tRNA(Asn/Gln) amidotransferase subunit C (97 aa).

The protein belongs to the GatC family. Heterotrimer of A, B and C subunits.

It carries out the reaction L-glutamyl-tRNA(Gln) + L-glutamine + ATP + H2O = L-glutaminyl-tRNA(Gln) + L-glutamate + ADP + phosphate + H(+). It catalyses the reaction L-aspartyl-tRNA(Asn) + L-glutamine + ATP + H2O = L-asparaginyl-tRNA(Asn) + L-glutamate + ADP + phosphate + 2 H(+). Its function is as follows. Allows the formation of correctly charged Asn-tRNA(Asn) or Gln-tRNA(Gln) through the transamidation of misacylated Asp-tRNA(Asn) or Glu-tRNA(Gln) in organisms which lack either or both of asparaginyl-tRNA or glutaminyl-tRNA synthetases. The reaction takes place in the presence of glutamine and ATP through an activated phospho-Asp-tRNA(Asn) or phospho-Glu-tRNA(Gln). This Clostridium botulinum (strain Eklund 17B / Type B) protein is Aspartyl/glutamyl-tRNA(Asn/Gln) amidotransferase subunit C.